Consider the following 583-residue polypeptide: Inactive carboxylesterase-like protein VdtD (583 aa).

The signal sequence occupies residues 1 to 23; the sequence is MFMTQIVFGIAPTLLKTFSHLTA. N-linked (GlcNAc...) asparagine glycosylation is found at Asn84, Asn109, Asn221, Asn265, Asn307, Asn350, Asn388, Asn448, and Asn468.

This sequence belongs to the type-B carboxylesterase/lipase family.

Its pathway is secondary metabolite biosynthesis. Functionally, inactive carboxylesterase-like protein; part of the gene cluster that mediates the biosynthesis of viriditoxin, one of the 'classical' secondary metabolites produced by fungi and that has antibacterial activity. The first step is performed by the polyketide synthase VdtA which condenses one acetyl-CoA and 6 malonyl-CoA units to form the heptaketide monomer backbone of viriditoxin. The product of VdtA is then O-methylated on C7 by the O-methyltransferase VdtC. The O-methyl group is important for the stereoselective coupling of the monomers at the final step of viriditoxin biosynthesis. The short-chain dehydrogenase/reductase VdtF then acts as a stereospecific reductase converting the pyrone to dihydropyrone via the reduction of the C3-C4 double bond. The FAD-binding monooxygenase VdtE then converts the ketone group into a methyl-ester group to yield semi-viriditoxin. Finally, the laccase VdtB is involved in dimerization of 2 semi-viriditoxin molecules to yield the final viriditoxin. VdtB is responsible for the regioselective 6,6'-coupling of semi-viriditoxin, which yields (M)-viriditoxin and (P)-viriditoxin at a ratio of 1:2. The non-catalytic carboxylesterase-like protein VdtD affects the stereochemistical outcome of the coupling. The highly reducing polyketide synthase VdtX is not involved in viriditoxin synthesis, but might possibly play a role in the production of additional metabolites not identified yet. This is Inactive carboxylesterase-like protein VdtD from Byssochlamys spectabilis (Paecilomyces variotii).